The chain runs to 155 residues: 6,7-dimethyl-8-ribityllumazine synthase (155 aa).

Residues tryptophan 18, 52-54, and 76-78 contribute to the 5-amino-6-(D-ribitylamino)uracil site; these read AFE and LVV. The Proton donor role is filled by arginine 84. Position 109 (serine 109) interacts with 5-amino-6-(D-ribitylamino)uracil. Histidine 123 is a binding site for (2S)-2-hydroxy-3-oxobutyl phosphate.

It belongs to the DMRL synthase family.

The catalysed reaction is (2S)-2-hydroxy-3-oxobutyl phosphate + 5-amino-6-(D-ribitylamino)uracil = 6,7-dimethyl-8-(1-D-ribityl)lumazine + phosphate + 2 H2O + H(+). It participates in cofactor biosynthesis; riboflavin biosynthesis; riboflavin from 2-hydroxy-3-oxobutyl phosphate and 5-amino-6-(D-ribitylamino)uracil: step 1/2. Its function is as follows. Catalyzes the formation of 6,7-dimethyl-8-ribityllumazine by condensation of 5-amino-6-(D-ribitylamino)uracil with 3,4-dihydroxy-2-butanone 4-phosphate. This is the penultimate step in the biosynthesis of riboflavin. This Rhodococcus erythropolis (Arthrobacter picolinophilus) protein is 6,7-dimethyl-8-ribityllumazine synthase.